A 421-amino-acid chain; its full sequence is Glucose-1-phosphate adenylyltransferase (421 aa).

Alpha-D-glucose 1-phosphate-binding positions include Tyr108, Gly173, 188–189 (EK), and Ser206.

This sequence belongs to the bacterial/plant glucose-1-phosphate adenylyltransferase family. Homotetramer.

It catalyses the reaction alpha-D-glucose 1-phosphate + ATP + H(+) = ADP-alpha-D-glucose + diphosphate. The protein operates within glycan biosynthesis; glycogen biosynthesis. Involved in the biosynthesis of ADP-glucose, a building block required for the elongation reactions to produce glycogen. Catalyzes the reaction between ATP and alpha-D-glucose 1-phosphate (G1P) to produce pyrophosphate and ADP-Glc. The protein is Glucose-1-phosphate adenylyltransferase of Mesorhizobium japonicum (strain LMG 29417 / CECT 9101 / MAFF 303099) (Mesorhizobium loti (strain MAFF 303099)).